We begin with the raw amino-acid sequence, 431 residues long: Adenylosuccinate synthetase (431 aa).

GTP-binding positions include 12–18 (GDEGKGK) and 40–42 (GHT). The Proton acceptor role is filled by Asp13. Asp13 and Gly40 together coordinate Mg(2+). Residues 13–16 (DEGK), 38–41 (NAGH), Thr129, Arg143, Gln224, and Thr239 contribute to the IMP site. His41 acts as the Proton donor in catalysis. Residue Lys292 forms an Isoglutamyl lysine isopeptide (Lys-Gln) (interchain with Q-Cter in protein Pup) linkage. 299–305 (VTTGRAR) is a substrate binding site. Position 303 (Arg303) interacts with IMP. GTP contacts are provided by residues Arg305, 331–333 (KLD), and 413–415 (GVG).

Belongs to the adenylosuccinate synthetase family. As to quaternary structure, homodimer. The cofactor is Mg(2+).

It is found in the cytoplasm. The catalysed reaction is IMP + L-aspartate + GTP = N(6)-(1,2-dicarboxyethyl)-AMP + GDP + phosphate + 2 H(+). It participates in purine metabolism; AMP biosynthesis via de novo pathway; AMP from IMP: step 1/2. Functionally, plays an important role in the de novo pathway of purine nucleotide biosynthesis. Catalyzes the first committed step in the biosynthesis of AMP from IMP. This Mycolicibacterium smegmatis (strain ATCC 700084 / mc(2)155) (Mycobacterium smegmatis) protein is Adenylosuccinate synthetase.